We begin with the raw amino-acid sequence, 584 residues long: 4-hydroxybenzoate decarboxylase subunit C (584 aa).

It belongs to the UbiD family. Component of the decarboxylase complex composed of the subunits B and C (Potential). The subunit D usually found in other organisms seems to be absent.

The enzyme catalyses 4-hydroxybenzoate + H(+) = phenol + CO2. With respect to regulation, the enzyme activity is enhanced by Mg(2+), Fe(2+), Mn(2+) and Ca(2+). No stimulation is observed with Cu(2+) and Zn(2+). Catalyzes the reversible decarboxylation of 4-hydroxybenzoate. The protein is 4-hydroxybenzoate decarboxylase subunit C of Chlamydia pneumoniae (Chlamydophila pneumoniae).